Reading from the N-terminus, the 508-residue chain is GMP synthase [glutamine-hydrolyzing] (508 aa).

In terms of domain architecture, Glutamine amidotransferase type-1 spans 1-189 (MILVLDFGSQ…ALLVCGCEKT (189 aa)). C78 acts as the Nucleophile in catalysis. Active-site residues include H163 and E165. The region spanning 190-383 (WGMQHFAQRE…LGVSQDFLMR (194 aa)) is the GMPS ATP-PPase domain. 217–223 (SGGVDST) provides a ligand contact to ATP.

As to quaternary structure, homodimer.

The enzyme catalyses XMP + L-glutamine + ATP + H2O = GMP + L-glutamate + AMP + diphosphate + 2 H(+). The protein operates within purine metabolism; GMP biosynthesis; GMP from XMP (L-Gln route): step 1/1. In terms of biological role, catalyzes the synthesis of GMP from XMP. The sequence is that of GMP synthase [glutamine-hydrolyzing] from Helicobacter pylori (strain P12).